Reading from the N-terminus, the 120-residue chain is Large ribosomal subunit protein uL18 (120 aa).

This sequence belongs to the universal ribosomal protein uL18 family. In terms of assembly, part of the 50S ribosomal subunit; part of the 5S rRNA/L5/L18/L25 subcomplex. Contacts the 5S and 23S rRNAs.

Functionally, this is one of the proteins that bind and probably mediate the attachment of the 5S RNA into the large ribosomal subunit, where it forms part of the central protuberance. The polypeptide is Large ribosomal subunit protein uL18 (Methylobacterium sp. (strain 4-46)).